Here is a 416-residue protein sequence, read N- to C-terminus: Meiotically up-regulated protein PB1A10.08 (416 aa).

The protein localises to the cytoplasm. Functionally, may have a role in meiosis and sporulation. The protein is Meiotically up-regulated protein PB1A10.08 of Schizosaccharomyces pombe (strain 972 / ATCC 24843) (Fission yeast).